The primary structure comprises 243 residues: Orotidine 5'-phosphate decarboxylase (243 aa).

Residues Asp19, Lys41, 69–78, Thr124, Arg185, Gln194, Gly214, and Arg215 contribute to the substrate site; that span reads DLKFFDIPAT. Residue Lys71 is the Proton donor of the active site.

Belongs to the OMP decarboxylase family. Type 1 subfamily. In terms of assembly, homodimer.

It carries out the reaction orotidine 5'-phosphate + H(+) = UMP + CO2. The protein operates within pyrimidine metabolism; UMP biosynthesis via de novo pathway; UMP from orotate: step 2/2. Catalyzes the decarboxylation of orotidine 5'-monophosphate (OMP) to uridine 5'-monophosphate (UMP). The sequence is that of Orotidine 5'-phosphate decarboxylase from Xanthomonas campestris pv. campestris (strain 8004).